The sequence spans 359 residues: Peptide chain release factor 1 (359 aa).

Glutamine 235 carries the post-translational modification N5-methylglutamine.

This sequence belongs to the prokaryotic/mitochondrial release factor family. In terms of processing, methylated by PrmC. Methylation increases the termination efficiency of RF1.

Its subcellular location is the cytoplasm. Functionally, peptide chain release factor 1 directs the termination of translation in response to the peptide chain termination codons UAG and UAA. This is Peptide chain release factor 1 from Anaplasma phagocytophilum (strain HZ).